A 207-amino-acid chain; its full sequence is Ribonuclease HII (207 aa).

Residues 12-201 form the RNase H type-2 domain; that stretch reads DLVAGVDEVG…VRAAWEAREG (190 aa). A divalent metal cation-binding residues include D18, E19, and D110.

This sequence belongs to the RNase HII family. Mn(2+) serves as cofactor. Mg(2+) is required as a cofactor.

Its subcellular location is the cytoplasm. It catalyses the reaction Endonucleolytic cleavage to 5'-phosphomonoester.. Endonuclease that specifically degrades the RNA of RNA-DNA hybrids. The chain is Ribonuclease HII from Pseudomonas putida (strain W619).